The sequence spans 272 residues: Putative phosphoenolpyruvate synthase regulatory protein (272 aa).

An ADP-binding site is contributed by 152–159 (GVSRCGKT).

The protein belongs to the pyruvate, phosphate/water dikinase regulatory protein family. PSRP subfamily.

It carries out the reaction [pyruvate, water dikinase] + ADP = [pyruvate, water dikinase]-phosphate + AMP + H(+). The enzyme catalyses [pyruvate, water dikinase]-phosphate + phosphate + H(+) = [pyruvate, water dikinase] + diphosphate. Functionally, bifunctional serine/threonine kinase and phosphorylase involved in the regulation of the phosphoenolpyruvate synthase (PEPS) by catalyzing its phosphorylation/dephosphorylation. In Pseudomonas putida (strain ATCC 700007 / DSM 6899 / JCM 31910 / BCRC 17059 / LMG 24140 / F1), this protein is Putative phosphoenolpyruvate synthase regulatory protein.